The sequence spans 244 residues: Dihydropteridine reductase (244 aa).

Position 2 is an N-acetylalanine (A2). An NADP(+)-binding site is contributed by L14–A38. Residues K73, K79, K96, and K102 each carry the N6-succinyllysine modification. The active-site Proton acceptor is the Y150.

This sequence belongs to the short-chain dehydrogenases/reductases (SDR) family. Homodimer.

It catalyses the reaction 5,6,7,8-tetrahydropteridine + NAD(+) = 6,7-dihydropteridine + NADH + H(+). The catalysed reaction is 5,6,7,8-tetrahydropteridine + NADP(+) = 6,7-dihydropteridine + NADPH + H(+). In terms of biological role, catalyzes the conversion of quinonoid dihydrobiopterin into tetrahydrobiopterin. In Homo sapiens (Human), this protein is Dihydropteridine reductase (QDPR).